The primary structure comprises 316 residues: Apolipoprotein E (316 aa).

The first 18 residues, 1–18 (MKALWAVLVVTLLAGCLA), serve as a signal peptide directing secretion. 8 tandem repeats follow at residues 76-97 (VLME…EQLG), 98-119 (PMAE…SRLG), 120-141 (ADME…TMLG), 142-163 (QSTE…KRLM), 164-185 (RDAE…EGAE), 186-207 (RGVG…QRTA), 208-229 (NLGA…ARIR), and 230-251 (GRLE…EQME). The 8 X 22 AA approximate tandem repeats stretch occupies residues 76–251 (VLMEDTMTEL…RLEEMREQME (176 aa)). Position 139 is a methionine sulfoxide (methionine 139). Serine 143 carries the post-translational modification Phosphoserine. The segment at 154 to 164 (HLRKLRKRLMR) is LDL and other lipoprotein receptors binding. A heparin-binding site is contributed by 158–161 (LRKR). The segment at 206–286 (TANLGAGAGK…GWFEPLVEDM (81 aa)) is lipid-binding and lipoprotein association. 225 to 232 (GARIRGRL) lines the heparin pocket. The homooligomerization stretch occupies residues 262 to 316 (QQMRLQAEIFQARLKGWFEPLVEDMQRQWANLVEKIQASVAANPIPPSSVPQESP). A specificity for association with VLDL region spans residues 274-286 (RLKGWFEPLVEDM).

It belongs to the apolipoprotein A1/A4/E family. As to quaternary structure, homotetramer. May interact with ABCA1; functionally associated with ABCA1 in the biogenesis of HDLs. May interact with APP/A4 amyloid-beta peptide; the interaction is extremely stable in vitro but its physiological significance is unclear. May interact with MAPT. May interact with MAP2. In the cerebrospinal fluid, interacts with secreted SORL1. Interacts with PMEL; this allows the loading of PMEL luminal fragment on ILVs to induce fibril nucleation. Post-translationally, APOE exists as multiple glycosylated and sialylated glycoforms within cells and in plasma. The extent of glycosylation and sialylation are tissue and context specific. Glycated in plasma VLDL. In terms of processing, phosphorylated by FAM20C in the extracellular medium.

The protein resides in the secreted. Its subcellular location is the extracellular space. It localises to the extracellular matrix. It is found in the extracellular vesicle. The protein localises to the endosome. The protein resides in the multivesicular body. APOE is an apolipoprotein, a protein associating with lipid particles, that mainly functions in lipoprotein-mediated lipid transport between organs via the plasma and interstitial fluids. APOE is a core component of plasma lipoproteins and is involved in their production, conversion and clearance. Apolipoproteins are amphipathic molecules that interact both with lipids of the lipoprotein particle core and the aqueous environment of the plasma. As such, APOE associates with chylomicrons, chylomicron remnants, very low density lipoproteins (VLDL) and intermediate density lipoproteins (IDL) but shows a preferential binding to high-density lipoproteins (HDL). It also binds a wide range of cellular receptors including the LDL receptor/LDLR, the LDL receptor-related proteins LRP1, LRP2 and LRP8 and the very low-density lipoprotein receptor/VLDLR that mediate the cellular uptake of the APOE-containing lipoprotein particles. Finally, APOE also has a heparin-binding activity and binds heparan-sulfate proteoglycans on the surface of cells, a property that supports the capture and the receptor-mediated uptake of APOE-containing lipoproteins by cells. A main function of APOE is to mediate lipoprotein clearance through the uptake of chylomicrons, VLDLs, and HDLs by hepatocytes. APOE is also involved in the biosynthesis by the liver of VLDLs as well as their uptake by peripheral tissues ensuring the delivery of triglycerides and energy storage in muscle, heart and adipose tissues. By participating in the lipoprotein-mediated distribution of lipids among tissues, APOE plays a critical role in plasma and tissues lipid homeostasis. APOE is also involved in two steps of reverse cholesterol transport, the HDLs-mediated transport of cholesterol from peripheral tissues to the liver, and thereby plays an important role in cholesterol homeostasis. First, it is functionally associated with ABCA1 in the biogenesis of HDLs in tissues. Second, it is enriched in circulating HDLs and mediates their uptake by hepatocytes. APOE also plays an important role in lipid transport in the central nervous system, regulating neuron survival and sprouting. In Peromyscus leucopus (White-footed mouse), this protein is Apolipoprotein E (Apoe).